A 224-amino-acid polypeptide reads, in one-letter code: Putative adhesin A1G_07050 (224 aa).

The first 22 residues, 1–22 (MKKLLLIAATSATILSSSVSFA), serve as a signal peptide directing secretion.

The chain is Putative adhesin A1G_07050 from Rickettsia rickettsii (strain Sheila Smith).